Reading from the N-terminus, the 717-residue chain is MAPERHPPAFEGAGQESGLQVWRVERLELVPVPPSRHGDFFVGDAYLVLHTVRRGAAVAYRLHYWLGKECTQDESTAAAIFTVQLDDYLGGKPVQSREIQGYESNEFVSYFKGGIKYKAGGVASGFNHVVTNDLSAQRLLHIKGRRVVRATEVPLTWASFNKGDCFIIDLGNEIYQWCGSSCNKYERLKATQVAVGIRDNERNGRSRLITVEEGSEPDELITVLGEKPELPECSDDDDEMADIANRKSAKLYMVSDASGSMKLSVVAEENPFSMAMLLSEECFILDNGAARKIFVWKGKDANPQERKAAMKNAETFVQQMNYPANTQIQVLPEGGETPIFKQFFKDWKDKDQSDGFGKVYVTERVAKIEQIEFDATKLHESPQMAAQHNMIDDGSGKVQIWRVESSGRVPVEPETYGQFYGGDCYIILYTYPKGQIIYTWQGACATKDELTASAFLTVQLDRSLNDQAVQIRVSQGKEPPHLLSLFKNKPLIVYKNGTSKKEGQKPAPPTRLFQIRRNLMSVTRIAEVDVDAMSLNSNDAFVLKLPNNTGYTWVGKGVNKEEEQGAQYIASVLKCQTAKINEGQEPEEFWKALGGKKKYQTSSQLLTKAEDHPPRLFGCSNKTGRFIIEEVPGEFTQDDLAEDDVMLLDAWEQVFVWIGKEANETERQESVKSAKRYIETDPSGRDKGTPIVIVKQGHEPPTFTGWFLAWDSNKWKN.

Residues 1–363 form an actin-severing region; sequence MAPERHPPAF…DGFGKVYVTE (363 aa). A Gelsolin-like 1 repeat occupies 28-108; sequence ELVPVPPSRH…IQGYESNEFV (81 aa). Residues 112 to 119 and 138 to 146 contribute to the a 1,2-diacyl-sn-glycero-3-phospho-(1D-myo-inositol-4,5-bisphosphate) site; these read KGGIKYKA and RLLHIKGRR. 5 Gelsolin-like repeats span residues 148 to 220, 265 to 340, 408 to 483, 526 to 590, and 628 to 703; these read VRAT…PDEL, VVAE…TPIF, RVPV…PHLL, AEVD…EEFW, and IEEV…PPTF. The segment at 364 to 715 is ca(2+)-dependent actin binding; sequence RVAKIEQIEF…WFLAWDSNKW (352 aa). Ca(2+) contacts are provided by N538, D539, E562, D643, D644, and E666.

This sequence belongs to the villin/gelsolin family.

It is found in the cytoplasm. The protein resides in the cytoskeleton. Its subcellular location is the cell projection. It localises to the podosome. Its function is as follows. Ca(2+)-dependent actin filament-severing protein that has a regulatory function in exocytosis by affecting the organization of the microfilament network underneath the plasma membrane. In vitro, also has barbed end capping and nucleating activities in the presence of Ca(2+). Severing activity is inhibited by phosphatidylinositol 4,5-bis-phosphate (PIP2). Required for megakaryocyte differentiation, maturation, polyploidization and apoptosis with the release of platelet-like particles. Plays a role in osteoclastogenesis (OCG) and actin cytoskeletal organization in osteoclasts. Regulates chondrocyte proliferation and differentiation. Inhibits cell proliferation and tumorigenesis. Signaling is mediated by MAPK, p38 and JNK pathways. This Gallus gallus (Chicken) protein is Scinderin (SCIN).